Reading from the N-terminus, the 905-residue chain is A disintegrin and metalloproteinase with thrombospondin motifs 8 (905 aa).

Positions 1–28 (MLRDPTTTGWPPLLLLLLQLPPPPLVCG) are cleaved as a signal peptide. A propeptide spanning residues 29 to 228 (APAGPGTGAQ…PFGSKTRSKR (200 aa)) is cleaved from the precursor. Disordered regions lie at residues 139–163 (PQGA…RRED) and 186–225 (NGQG…SKTR). Over residues 191–215 (ERSDNEEDRKQDKEGLLKETEDSRK) the composition is skewed to basic and acidic residues. Residues 234 to 444 (RFVETLLVAD…GHGDCLLDAP (211 aa)) enclose the Peptidase M12B domain. Intrachain disulfides connect cysteine 309–cysteine 362, cysteine 338–cysteine 344, cysteine 356–cysteine 439, cysteine 394–cysteine 423, cysteine 478–cysteine 502, cysteine 487–cysteine 523, cysteine 517–cysteine 528, cysteine 554–cysteine 591, cysteine 558–cysteine 596, and cysteine 569–cysteine 581. Histidine 378 lines the Zn(2+) pocket. Glutamate 379 is a catalytic residue. Zn(2+)-binding residues include histidine 382 and histidine 388. Asparagine 415, asparagine 480, and asparagine 506 each carry an N-linked (GlcNAc...) asparagine glycan. Residues 453–541 (GLPGHSTLYE…EDVENPKAVV (89 aa)) enclose the Disintegrin domain. In terms of domain architecture, TSP type-1 1 spans 542-597 (DGDWGPWRPWGQCSRTCGGGIQFSNRECDNPMPQNGGRFCLGERVKYQSCNTEECP). Asparagine 615 is a glycosylation site (N-linked (GlcNAc...) asparagine). Residues 706–847 (RKISGSFTPF…RATTNIIQSL (142 aa)) form a spacer region. The region spanning 848-904 (PSAEWVLGDWSECPSTCRGSWQRRTVECRDPSGQASDTCDEALKPEDAKPCGSQPCP) is the TSP type-1 2 domain. A disordered region spans residues 877–905 (DPSGQASDTCDEALKPEDAKPCGSQPCPL).

Requires Zn(2+) as cofactor. Post-translationally, the precursor is cleaved by a furin endopeptidase. Glycosylated. Can be O-fucosylated by POFUT2 on a serine or a threonine residue found within the consensus sequence C1-X(2)-(S/T)-C2-G of the TSP type-1 repeat domains where C1 and C2 are the first and second cysteine residue of the repeat, respectively. Fucosylated repeats can then be further glycosylated by the addition of a beta-1,3-glucose residue by the glucosyltransferase, B3GALTL. Fucosylation mediates the efficient secretion of ADAMTS family members. Can also be C-glycosylated with one or two mannose molecules on tryptophan residues within the consensus sequence W-X-X-W of the TPRs, and N-glycosylated. These other glycosylations can also facilitate secretion. As to expression, expressed specifically in adult lung and heart and low expression during mouse development.

The protein localises to the secreted. Its subcellular location is the extracellular space. It localises to the extracellular matrix. Functionally, has anti-angiogenic properties. The polypeptide is A disintegrin and metalloproteinase with thrombospondin motifs 8 (Adamts8) (Mus musculus (Mouse)).